A 194-amino-acid chain; its full sequence is dTTP/UTP pyrophosphatase (194 aa).

The active-site Proton acceptor is aspartate 68.

This sequence belongs to the Maf family. YhdE subfamily. It depends on a divalent metal cation as a cofactor.

The protein resides in the cytoplasm. The catalysed reaction is dTTP + H2O = dTMP + diphosphate + H(+). The enzyme catalyses UTP + H2O = UMP + diphosphate + H(+). In terms of biological role, nucleoside triphosphate pyrophosphatase that hydrolyzes dTTP and UTP. May have a dual role in cell division arrest and in preventing the incorporation of modified nucleotides into cellular nucleic acids. The polypeptide is dTTP/UTP pyrophosphatase (Clostridioides difficile (strain 630) (Peptoclostridium difficile)).